The sequence spans 336 residues: Homeobox-leucine zipper protein HAT14 (336 aa).

Disordered stretches follow at residues 53-141 (RSLS…PDSV) and 160-194 (SNKRDIDDEVERSASRASNEDNDDENGSTRKKLRL). Residues 64–81 (EDEKKKPAPRAKKSDEFR) show a composition bias toward basic and acidic residues. A compositionally biased stretch (acidic residues) spans 120 to 129 (VEEEEEEEEA). Residues 130-141 (VPSMSVSPPDSV) show a composition bias toward low complexity. The segment covering 160–173 (SNKRDIDDEVERSA) has biased composition (basic and acidic residues). A DNA-binding region (homeobox) is located at residues 187–246 (STRKKLRLSKDQSAFLEDSFKEHSTLNPKQKIALAKQLNLRPRQVEVWFQNRRARTKLKQ). Residues 254-275 (LKRCCESLTEENRRLQKEVKEL) form a leucine-zipper region.

This sequence belongs to the HD-ZIP homeobox family. Class II subfamily.

It localises to the nucleus. Functionally, probable transcription factor. The protein is Homeobox-leucine zipper protein HAT14 (HAT14) of Arabidopsis thaliana (Mouse-ear cress).